Here is a 460-residue protein sequence, read N- to C-terminus: Cysteine--tRNA ligase (460 aa).

A Zn(2+)-binding site is contributed by C28. A 'HIGH' region motif is present at residues 30–40; the sequence is VTIYDLCHIGH. Zn(2+) contacts are provided by C209, H234, and E238. A 'KMSKS' region motif is present at residues 266–270; sequence KMSKS. An ATP-binding site is contributed by K269.

This sequence belongs to the class-I aminoacyl-tRNA synthetase family. As to quaternary structure, monomer. Zn(2+) serves as cofactor.

The protein resides in the cytoplasm. It catalyses the reaction tRNA(Cys) + L-cysteine + ATP = L-cysteinyl-tRNA(Cys) + AMP + diphosphate. The sequence is that of Cysteine--tRNA ligase from Shewanella frigidimarina (strain NCIMB 400).